A 647-amino-acid polypeptide reads, in one-letter code: TNFAIP3-interacting protein 1 (647 aa).

Residues M39–L72 are a coiled coil. Residues Q61–E71 show a composition bias toward basic and acidic residues. The interval Q61 to S168 is disordered. At S77 the chain carries Phosphoserine. Positions T95–Q425 are interaction with Nef. Residues A102–T115 show a composition bias toward low complexity. The span at E143–T155 shows a compositional bias: polar residues. Residues S209–K270 are a coiled coil. S297, S416, and S455 each carry phosphoserine. The stretch at A311–E551 forms a coiled coil. The segment at A444–S601 is required for inhibitory activity of TNF-induced NF-kappa-B activation. Residues K465–T523 are ubiquitin-binding domain (UBD). The Nuclear localization signal motif lies at Q537–A543. Y565 carries the post-translational modification Phosphotyrosine. R584 bears the Asymmetric dimethylarginine mark. Residue R612 is modified to Asymmetric dimethylarginine; alternate. The residue at position 612 (R612) is an Omega-N-methylarginine; alternate. The interval P613–Q647 is disordered. The segment covering E637–Q647 has biased composition (acidic residues). Position 638 is a phosphoserine (S638).

In terms of assembly, interacts with TNFAIP3 and IKBKG (polyubiquitinated); facilitates TNFAIP3-mediated de-ubiquitination of NEMO/IKBKG. Interacts with polyubiquitin. Interacts with MAPK1, SELPLG and PIK3CD. Interacts with IRAK1 (polyubiquitinated). Interacts with MYD88; the interaction is indicative for participation in an activated TLR-signaling complex. Interacts with TAX1BP1. In terms of processing, phosphorylation at Tyr-565 by SRC-family kinases recruits phosphoinositide-3-kinase (PI3K) PIK3CD:p85 heterodimer which results in integrin activation and leukocyte adhesion to activated endothelium during inflammation. Ubiquitous. Abundant in heart and skeletal muscle and expressed at lower levels in thymus, liver, kidney, brain and intestinal tract.

It is found in the cytoplasm. Its subcellular location is the nucleus. Functionally, inhibits NF-kappa-B activation and TNF-induced NF-kappa-B-dependent gene expression by regulating TAX1BP1 and A20/TNFAIP3-mediated deubiquitination of IKBKG; proposed to link A20/TNFAIP3 to ubiquitinated IKBKG. Involved in regulation of EGF-induced ERK1/ERK2 signaling pathway; blocks MAPK3/MAPK1 nuclear translocation and MAPK1-dependent transcription. Increases cell surface CD4(T4) antigen expression. Involved in the anti-inflammatory response of macrophages and positively regulates TLR-induced activation of CEBPB. Involved in the prevention of autoimmunity; this function implicates binding to polyubiquitin. Involved in leukocyte integrin activation during inflammation; this function is mediated by association with SELPLG and dependent on phosphorylation by SRC-family kinases. This is TNFAIP3-interacting protein 1 (Tnip1) from Mus musculus (Mouse).